The primary structure comprises 247 residues: ATP synthase subunit a, chloroplastic (247 aa).

The next 5 membrane-spanning stretches (helical) occupy residues 38 to 58, 95 to 115, 134 to 154, 199 to 219, and 220 to 240; these read QVLI…ILII, VPFI…GALL, INTT…AGLS, LVVV…VMFL, and GLFT…AYIG.

This sequence belongs to the ATPase A chain family. As to quaternary structure, F-type ATPases have 2 components, CF(1) - the catalytic core - and CF(0) - the membrane proton channel. CF(1) has five subunits: alpha(3), beta(3), gamma(1), delta(1), epsilon(1). CF(0) has four main subunits: a, b, b' and c.

It localises to the plastid. The protein localises to the chloroplast thylakoid membrane. Key component of the proton channel; it plays a direct role in the translocation of protons across the membrane. In Glycine max (Soybean), this protein is ATP synthase subunit a, chloroplastic.